Consider the following 560-residue polypeptide: Radial spoke head protein 3 homolog (560 aa).

2 disordered regions span residues 134 to 186 and 225 to 249; these read RKRG…EEPM and ARKR…PVEG. The span at 153–162 shows a compositional bias: polar residues; sequence RAPSTYTYTS. Positions 215–239 form a coiled coil; it reads DSLELQRQREARKRALARKQAQEQL. Thr-286 bears the Phosphothreonine; by MAPK1 mark. A coiled-coil region spans residues 331–385; sequence LEVMEEEELANLRASQREYEELRNSERAEVQRLEEQERRHREEKERRKKQQWEIM. Disordered regions lie at residues 354–375, 473–498, and 526–560; these read NSER…EEKE, HGED…ESLE, and DRRS…EELS.

This sequence belongs to the flagellar radial spoke RSP3 family. Component of the axonemal radial spoke 1 (RS1) and 2 (RS2) complexes, at least composed of spoke head proteins RSPH1, RSPH3, RSPH9 and the cilia-specific component RSPH4A or sperm-specific component RSPH6A, spoke stalk proteins RSPH14, DNAJB13, DYDC1, ROPN1L and NME5, and the RS1 complex-specific anchor protein IQUB. Interacts with IQUB. Interacts with phosphorylated MAPK1. Interacts with MEK1. Interacts with PKA regulatory subunits PRKAR1A and PRKAR1B. Interacts with RSPH1. Interacts with RSPH4A. Interacts with RSPH6A. Interacts with RSPH9. Interacts with LRRC23.

Its subcellular location is the cytoplasm. The protein localises to the cytoskeleton. It is found in the cilium axoneme. It localises to the flagellum axoneme. Functionally, functions as part of axonemal radial spoke complexes that play an important part in the motility of sperm and cilia. Functions as a protein kinase A-anchoring protein that scaffolds the cAMP-dependent protein kinase holoenzyme. May serve as a point of convergence for MAPK and PKA signaling in cilia. The protein is Radial spoke head protein 3 homolog (RSPH3) of Homo sapiens (Human).